The sequence spans 730 residues: Hemolytic phospholipase C (730 aa).

A signal peptide (tat-type signal) is located at residues 1-38 (MTENWKFRRRTFLKHGAQAATLAGLSGLFPETLRRALA).

This sequence belongs to the bacterial phospholipase C family. Post-translationally, predicted to be exported by the Tat system. The position of the signal peptide cleavage has not been experimentally proven.

It carries out the reaction a 1,2-diacyl-sn-glycero-3-phosphocholine + H2O = phosphocholine + a 1,2-diacyl-sn-glycerol + H(+). Hydrolyzes sphingomyelin in addition to phosphatidylcholine. In Pseudomonas aeruginosa (strain ATCC 15692 / DSM 22644 / CIP 104116 / JCM 14847 / LMG 12228 / 1C / PRS 101 / PAO1), this protein is Hemolytic phospholipase C (plcH).